The primary structure comprises 155 residues: SsrA-binding protein (155 aa).

It belongs to the SmpB family.

The protein localises to the cytoplasm. Required for rescue of stalled ribosomes mediated by trans-translation. Binds to transfer-messenger RNA (tmRNA), required for stable association of tmRNA with ribosomes. tmRNA and SmpB together mimic tRNA shape, replacing the anticodon stem-loop with SmpB. tmRNA is encoded by the ssrA gene; the 2 termini fold to resemble tRNA(Ala) and it encodes a 'tag peptide', a short internal open reading frame. During trans-translation Ala-aminoacylated tmRNA acts like a tRNA, entering the A-site of stalled ribosomes, displacing the stalled mRNA. The ribosome then switches to translate the ORF on the tmRNA; the nascent peptide is terminated with the 'tag peptide' encoded by the tmRNA and targeted for degradation. The ribosome is freed to recommence translation, which seems to be the essential function of trans-translation. This is SsrA-binding protein from Ligilactobacillus salivarius (strain UCC118) (Lactobacillus salivarius).